We begin with the raw amino-acid sequence, 156 residues long: Cytochrome c-type biogenesis protein CcmE 1 (156 aa).

The Cytoplasmic portion of the chain corresponds to 1–8; sequence MNATRKQR. Residues 9 to 29 form a helical; Signal-anchor for type II membrane protein membrane-spanning segment; the sequence is LCLVIGVLAAAALAVTLIVFA. Residues 30 to 156 are Periplasmic-facing; that stretch reads LQRNMSYLFT…ATAAPLTTPR (127 aa). Histidine 123 and tyrosine 127 together coordinate heme.

This sequence belongs to the CcmE/CycJ family.

The protein localises to the cell inner membrane. Functionally, heme chaperone required for the biogenesis of c-type cytochromes. Transiently binds heme delivered by CcmC and transfers the heme to apo-cytochromes in a process facilitated by CcmF and CcmH. This Xanthomonas oryzae pv. oryzae (strain MAFF 311018) protein is Cytochrome c-type biogenesis protein CcmE 1.